Consider the following 70-residue polypeptide: Small ribosomal subunit protein bS18c (70 aa).

Belongs to the bacterial ribosomal protein bS18 family. Part of the 30S ribosomal subunit.

The protein resides in the plastid. It is found in the chloroplast. This chain is Small ribosomal subunit protein bS18c, found in Pyropia yezoensis (Susabi-nori).